The following is a 218-amino-acid chain: N-(5'-phosphoribosyl)anthranilate isomerase (218 aa).

Belongs to the TrpF family.

The catalysed reaction is N-(5-phospho-beta-D-ribosyl)anthranilate = 1-(2-carboxyphenylamino)-1-deoxy-D-ribulose 5-phosphate. Its pathway is amino-acid biosynthesis; L-tryptophan biosynthesis; L-tryptophan from chorismate: step 3/5. The chain is N-(5'-phosphoribosyl)anthranilate isomerase from Chelativorans sp. (strain BNC1).